We begin with the raw amino-acid sequence, 142 residues long: Ornithine decarboxylase antizyme (142 aa).

Positions 1–19 are enriched in low complexity; sequence MSSSIVLSNNNSNSNSMSM. Residues 1 to 34 are disordered; the sequence is MSSSIVLSNNNSNSNSMSMIGQSPPCCSDVPNTP.

Belongs to the ODC antizyme family. In terms of assembly, interacts with ODC1 and thereby sterically blocks ODC homodimerization.

Functionally, ornithine decarboxylase (ODC) antizyme protein that negatively regulates ODC activity and intracellular polyamine biosynthesis and uptake in response to increased intracellular polyamine levels. Binds to ODC monomers, inhibiting the assembly of the functional ODC homodimer, and targets the monomers for ubiquitin-independent proteolytic destruction by the 26S proteasome. The protein is Ornithine decarboxylase antizyme of Pristionchus pacificus (Parasitic nematode).